Consider the following 365-residue polypeptide: Protein RecA (365 aa).

73–80 (GPESSGKT) contributes to the ATP binding site.

This sequence belongs to the RecA family.

The protein localises to the cytoplasm. In terms of biological role, can catalyze the hydrolysis of ATP in the presence of single-stranded DNA, the ATP-dependent uptake of single-stranded DNA by duplex DNA, and the ATP-dependent hybridization of homologous single-stranded DNAs. It interacts with LexA causing its activation and leading to its autocatalytic cleavage. The chain is Protein RecA from Prochlorococcus marinus (strain MIT 9312).